We begin with the raw amino-acid sequence, 353 residues long: Histidine biosynthesis bifunctional protein HisB (353 aa).

Residues 1–164 (MKNKILFIDR…HITKYIIKHN (164 aa)) form a histidinol-phosphatase region. Asp-9 serves as the catalytic Nucleophile. 2 residues coordinate Mg(2+): Asp-9 and Asp-11. The Proton donor role is filled by Asp-11. Residues Cys-93, His-95, Cys-101, and Cys-103 each coordinate Zn(2+). Residue Asp-128 coordinates Mg(2+). Residues 165–353 (RYAEIIRRTK…NMLPTSKGIL (189 aa)) form an imidazoleglycerol-phosphate dehydratase region.

In the N-terminal section; belongs to the histidinol-phosphatase family. The protein in the C-terminal section; belongs to the imidazoleglycerol-phosphate dehydratase family. It depends on Mg(2+) as a cofactor. The cofactor is Zn(2+).

The protein resides in the cytoplasm. The catalysed reaction is D-erythro-1-(imidazol-4-yl)glycerol 3-phosphate = 3-(imidazol-4-yl)-2-oxopropyl phosphate + H2O. The enzyme catalyses L-histidinol phosphate + H2O = L-histidinol + phosphate. Its pathway is amino-acid biosynthesis; L-histidine biosynthesis; L-histidine from 5-phospho-alpha-D-ribose 1-diphosphate: step 6/9. The protein operates within amino-acid biosynthesis; L-histidine biosynthesis; L-histidine from 5-phospho-alpha-D-ribose 1-diphosphate: step 8/9. This is Histidine biosynthesis bifunctional protein HisB from Buchnera aphidicola subsp. Acyrthosiphon pisum (strain Tuc7).